Reading from the N-terminus, the 509-residue chain is L-arabinose isomerase (509 aa).

Mn(2+)-binding residues include Glu313, Glu340, His357, and His456.

Belongs to the arabinose isomerase family. Mn(2+) is required as a cofactor.

The catalysed reaction is beta-L-arabinopyranose = L-ribulose. The protein operates within carbohydrate degradation; L-arabinose degradation via L-ribulose; D-xylulose 5-phosphate from L-arabinose (bacterial route): step 1/3. Catalyzes the conversion of L-arabinose to L-ribulose. The polypeptide is L-arabinose isomerase (Phocaeicola vulgatus (strain ATCC 8482 / DSM 1447 / JCM 5826 / CCUG 4940 / NBRC 14291 / NCTC 11154) (Bacteroides vulgatus)).